Reading from the N-terminus, the 354-residue chain is Ferrochelatase (354 aa).

His214 and Glu295 together coordinate Fe cation.

This sequence belongs to the ferrochelatase family.

The protein localises to the cytoplasm. The catalysed reaction is heme b + 2 H(+) = protoporphyrin IX + Fe(2+). It participates in porphyrin-containing compound metabolism; protoheme biosynthesis; protoheme from protoporphyrin-IX: step 1/1. Catalyzes the ferrous insertion into protoporphyrin IX. The sequence is that of Ferrochelatase from Burkholderia ambifaria (strain ATCC BAA-244 / DSM 16087 / CCUG 44356 / LMG 19182 / AMMD) (Burkholderia cepacia (strain AMMD)).